The chain runs to 65 residues: Large ribosomal subunit protein uL29 (65 aa).

The protein belongs to the universal ribosomal protein uL29 family.

This is Large ribosomal subunit protein uL29 from Acinetobacter baumannii (strain AB307-0294).